The chain runs to 135 residues: Large ribosomal subunit protein eL32 (135 aa).

K9 is covalently cross-linked (Glycyl lysine isopeptide (Lys-Gly) (interchain with G-Cter in SUMO2)). K50 is modified (N6-succinyllysine). Phosphoserine is present on S62.

This sequence belongs to the eukaryotic ribosomal protein eL32 family. In terms of assembly, component of the large ribosomal subunit.

It is found in the cytoplasm. In terms of biological role, component of the large ribosomal subunit. The ribosome is a large ribonucleoprotein complex responsible for the synthesis of proteins in the cell. In Oryctolagus cuniculus (Rabbit), this protein is Large ribosomal subunit protein eL32 (RPL32).